The primary structure comprises 95 residues: Large ribosomal subunit protein bL28 (95 aa).

The interval 1–28 is disordered; sequence MARKRTLGGKAPQAGNKVSHSQRKTRRQ.

The protein belongs to the bacterial ribosomal protein bL28 family.

This Magnetococcus marinus (strain ATCC BAA-1437 / JCM 17883 / MC-1) protein is Large ribosomal subunit protein bL28.